We begin with the raw amino-acid sequence, 518 residues long: Protein PNS1 (518 aa).

Residues 1 to 14 (MSDYPPPNYPPPNH) show a composition bias toward pro residues. The segment at 1–24 (MSDYPPPNYPPPNHPQYQQQQDET) is disordered. Residues 1–63 (MSDYPPPNYP…KVEKPKFNDW (63 aa)) are Cytoplasmic-facing. A helical membrane pass occupies residues 64–84 (PFAIFFWLVVAGFIAVAGITL). At 85-111 (NALRSTYGFQGGSIYGSGNTFTLNTNT) the chain is on the extracellular side. A helical membrane pass occupies residues 112 to 132 (IILFAFIIVMAFILSAAIIVF). At 133–139 (ARLAPKA) the chain is on the cytoplasmic side. The helical transmembrane segment at 140 to 160 (FIVTGVILNVVLGIGTAIFYF) threads the bilayer. Residues 161–163 (VEK) are Extracellular-facing. The helical transmembrane segment at 164–184 (YYSAAIVFLIFALFGAWCYWS) threads the bilayer. Residues 185–210 (SRHRIPLSATILTIVIDVMKMYPSTL) are Cytoplasmic-facing. A helical membrane pass occupies residues 211–231 (IASFIGLIFSAAFSALFSIVI). Residues 232-256 (VATYVKYDPNSNNEACSVGGGSCSK) are Extracellular-facing. The chain crosses the membrane as a helical span at residues 257 to 277 (GKLIGVLVFVFFAGYYISEVI). At 278–314 (RNVIHVVIAGIYGTWYYLANSDQGAPKHPALSSLKRA) the chain is on the cytoplasmic side. Residues 315 to 335 (LTYCFGSITFGSLIVSLIQLL) traverse the membrane as a helical segment. Residues 336-351 (RQFISILRSNFAADGN) lie on the Extracellular side of the membrane. The chain crosses the membrane as a helical span at residues 352–372 (GWGVCGMIILDFFVGFIDWLV). At 373 to 417 (RYLNKYAYCYVALYGKSYIKSAKDTFDLIRFKGMDALINDMFINT) the chain is on the cytoplasmic side. A helical transmembrane segment spans residues 418–438 (ALNLYSLFVAYLVALLAYLYL). At 439-445 (KFTKPEY) the chain is on the extracellular side. Residues 446–466 (NSGGAFYAPVIAFAFLIAGQI) traverse the membrane as a helical segment. The Cytoplasmic segment spans residues 467-518 (NRISLTVIESGTATFFVALAKDPEIFQMTNRNRFDDIFRNYPQVLEKITSDH).

Belongs to the CTL (choline transporter-like) family.

The protein localises to the cell membrane. In terms of biological role, probably involved in transport through the plasma membrane. This is Protein PNS1 (PNS1) from Candida albicans (strain SC5314 / ATCC MYA-2876) (Yeast).